The following is a 93-amino-acid chain: Small ribosomal subunit protein uS19 (93 aa).

It belongs to the universal ribosomal protein uS19 family.

Its function is as follows. Protein S19 forms a complex with S13 that binds strongly to the 16S ribosomal RNA. In Cutibacterium acnes (strain DSM 16379 / KPA171202) (Propionibacterium acnes), this protein is Small ribosomal subunit protein uS19.